The primary structure comprises 260 residues: Ubiquinone/menaquinone biosynthesis C-methyltransferase UbiE (260 aa).

Residues T83, D104, N132–A133, and S149 each bind S-adenosyl-L-methionine.

The protein belongs to the class I-like SAM-binding methyltransferase superfamily. MenG/UbiE family.

It carries out the reaction a 2-demethylmenaquinol + S-adenosyl-L-methionine = a menaquinol + S-adenosyl-L-homocysteine + H(+). The enzyme catalyses a 2-methoxy-6-(all-trans-polyprenyl)benzene-1,4-diol + S-adenosyl-L-methionine = a 5-methoxy-2-methyl-3-(all-trans-polyprenyl)benzene-1,4-diol + S-adenosyl-L-homocysteine + H(+). It functions in the pathway quinol/quinone metabolism; menaquinone biosynthesis; menaquinol from 1,4-dihydroxy-2-naphthoate: step 2/2. Its pathway is cofactor biosynthesis; ubiquinone biosynthesis. Functionally, methyltransferase required for the conversion of demethylmenaquinol (DMKH2) to menaquinol (MKH2) and the conversion of 2-polyprenyl-6-methoxy-1,4-benzoquinol (DDMQH2) to 2-polyprenyl-3-methyl-6-methoxy-1,4-benzoquinol (DMQH2). The polypeptide is Ubiquinone/menaquinone biosynthesis C-methyltransferase UbiE (Vibrio cholerae serotype O1 (strain ATCC 39315 / El Tor Inaba N16961)).